The sequence spans 200 residues: 3-isopropylmalate dehydratase small subunit (200 aa).

It belongs to the LeuD family. LeuD type 1 subfamily. As to quaternary structure, heterodimer of LeuC and LeuD.

The enzyme catalyses (2R,3S)-3-isopropylmalate = (2S)-2-isopropylmalate. It participates in amino-acid biosynthesis; L-leucine biosynthesis; L-leucine from 3-methyl-2-oxobutanoate: step 2/4. Functionally, catalyzes the isomerization between 2-isopropylmalate and 3-isopropylmalate, via the formation of 2-isopropylmaleate. The chain is 3-isopropylmalate dehydratase small subunit from Edwardsiella ictaluri (strain 93-146).